The primary structure comprises 246 residues: Small ribosomal subunit protein uS2 (246 aa).

It belongs to the universal ribosomal protein uS2 family.

This Burkholderia cenocepacia (strain HI2424) protein is Small ribosomal subunit protein uS2.